Here is a 283-residue protein sequence, read N- to C-terminus: 2-dehydro-3-deoxyphosphooctonate aldolase (283 aa).

This sequence belongs to the KdsA family.

The protein localises to the cytoplasm. It catalyses the reaction D-arabinose 5-phosphate + phosphoenolpyruvate + H2O = 3-deoxy-alpha-D-manno-2-octulosonate-8-phosphate + phosphate. The protein operates within carbohydrate biosynthesis; 3-deoxy-D-manno-octulosonate biosynthesis; 3-deoxy-D-manno-octulosonate from D-ribulose 5-phosphate: step 2/3. It participates in bacterial outer membrane biogenesis; lipopolysaccharide biosynthesis. This is 2-dehydro-3-deoxyphosphooctonate aldolase from Shewanella frigidimarina (strain NCIMB 400).